The following is a 429-amino-acid chain: 3-phosphoshikimate 1-carboxyvinyltransferase (429 aa).

3 residues coordinate 3-phosphoshikimate: Lys23, Ser24, and Arg28. Lys23 is a phosphoenolpyruvate binding site. Gly95 and Arg123 together coordinate phosphoenolpyruvate. Residues Ser168, Gln170, Asp316, and Lys343 each coordinate 3-phosphoshikimate. Residue Gln170 participates in phosphoenolpyruvate binding. The active-site Proton acceptor is Asp316. Arg347 and Arg389 together coordinate phosphoenolpyruvate.

It belongs to the EPSP synthase family. In terms of assembly, monomer.

The protein localises to the cytoplasm. The enzyme catalyses 3-phosphoshikimate + phosphoenolpyruvate = 5-O-(1-carboxyvinyl)-3-phosphoshikimate + phosphate. It participates in metabolic intermediate biosynthesis; chorismate biosynthesis; chorismate from D-erythrose 4-phosphate and phosphoenolpyruvate: step 6/7. Functionally, catalyzes the transfer of the enolpyruvyl moiety of phosphoenolpyruvate (PEP) to the 5-hydroxyl of shikimate-3-phosphate (S3P) to produce enolpyruvyl shikimate-3-phosphate and inorganic phosphate. This is 3-phosphoshikimate 1-carboxyvinyltransferase from Bacillus cereus (strain ZK / E33L).